A 314-amino-acid polypeptide reads, in one-letter code: Olfactory receptor 14K1 (314 aa).

Topologically, residues 1–23 (MTNQTQMMEFLLVRFTENWVLLR) are extracellular. The N-linked (GlcNAc...) asparagine glycan is linked to asparagine 3. Residues 24–44 (LHALLFSLIYLTAVLMNLVII) form a helical membrane-spanning segment. The Cytoplasmic portion of the chain corresponds to 45–52 (LLMILDHR). The helical transmembrane segment at 53 to 73 (LHMAMYFFLRHLSFLDLCLIS) threads the bilayer. Residues 74–97 (ATVPKSILNSVASTDSISFLGCVL) are Extracellular-facing. A disulfide bond links cysteine 95 and cysteine 187. Residues 98 to 118 (QLFLVVLLAGSEIGILTAMSY) form a helical membrane-spanning segment. Residues 119 to 131 (DRYAAICCPLHCE) are Cytoplasmic-facing. A helical membrane pass occupies residues 132–152 (AVMSRGLCVQLMALSWLNRGA). The Extracellular portion of the chain corresponds to 153–194 (LGLLYTAGTFSLNFYGSDELHQFFCDVPALLKLTCSKEHAII). A helical transmembrane segment spans residues 195–215 (SVSVAIGVCYAFSCLVCIVVS). Residues 216 to 235 (YVYIFSAVLRISQRQRQSKA) are Cytoplasmic-facing. A helical transmembrane segment spans residues 236 to 256 (FSNCVPHLIVVTVFLVTGAVA). Over 257–269 (YLKPGSDAPSILD) the chain is Extracellular. A helical membrane pass occupies residues 270 to 290 (LLVSVFYSVAPPTLNPVIYCL). Residues 291 to 314 (KNKDIKSALSKVLWNVRSSGVMKR) are Cytoplasmic-facing.

Belongs to the G-protein coupled receptor 1 family.

It localises to the cell membrane. In terms of biological role, odorant receptor. This chain is Olfactory receptor 14K1 (OR14K1), found in Homo sapiens (Human).